The following is a 413-amino-acid chain: Serine hydroxymethyltransferase (413 aa).

Residues Leu117 and 121-123 each bind (6S)-5,6,7,8-tetrahydrofolate; that span reads GHL. Lys226 bears the N6-(pyridoxal phosphate)lysine mark. Residues Glu239 and 349 to 351 each bind (6S)-5,6,7,8-tetrahydrofolate; that span reads SPF.

The protein belongs to the SHMT family. Homodimer. The cofactor is pyridoxal 5'-phosphate.

It is found in the cytoplasm. The catalysed reaction is (6R)-5,10-methylene-5,6,7,8-tetrahydrofolate + glycine + H2O = (6S)-5,6,7,8-tetrahydrofolate + L-serine. It participates in one-carbon metabolism; tetrahydrofolate interconversion. Its pathway is amino-acid biosynthesis; glycine biosynthesis; glycine from L-serine: step 1/1. Functionally, catalyzes the reversible interconversion of serine and glycine with tetrahydrofolate (THF) serving as the one-carbon carrier. This reaction serves as the major source of one-carbon groups required for the biosynthesis of purines, thymidylate, methionine, and other important biomolecules. Also exhibits THF-independent aldolase activity toward beta-hydroxyamino acids, producing glycine and aldehydes, via a retro-aldol mechanism. The protein is Serine hydroxymethyltransferase of Bacillus cereus (strain AH820).